We begin with the raw amino-acid sequence, 390 residues long: Manganese peroxidase 2 (390 aa).

The signal sequence occupies residues Met-1–Ser-23. Cystine bridges form between Cys-27/Cys-39, Cys-38/Cys-313, Cys-57/Cys-141, Cys-277/Cys-343, and Cys-365/Cys-372. Residues Glu-59 and Glu-63 each contribute to the Mn(2+) site. Residue His-70 is the Proton acceptor of the active site. Asp-71, Gly-86, Asp-88, and Ser-90 together coordinate Ca(2+). An N-linked (GlcNAc...) asparagine glycan is attached at Asn-155. Residue His-197 participates in heme b binding. A Ca(2+)-binding site is contributed by Ser-198. Mn(2+) is bound at residue Asp-203. Ca(2+) contacts are provided by Asp-215, Thr-217, and Asp-222. Asn-241 carries N-linked (GlcNAc...) asparagine glycosylation.

Belongs to the peroxidase family. Ligninase subfamily. Heme b is required as a cofactor. The cofactor is Ca(2+).

It localises to the secreted. The catalysed reaction is 2 Mn(2+) + H2O2 + 2 H(+) = 2 Mn(3+) + 2 H2O. Catalyzes the oxidation of Mn(2+) to Mn(3+). The latter, acting as a diffusible redox mediator, is capable of oxidizing a variety of lignin compounds. In Phlebia radiata (White-rot fungus), this protein is Manganese peroxidase 2 (mnp2).